The following is a 336-amino-acid chain: Melanoma-associated antigen B17 (336 aa).

A compositionally biased stretch (basic residues) spans 1–17; the sequence is MPRGQASKRRAREKRRQ. The tract at residues 1-108 is disordered; sequence MPRGQASKRR…SSSESTGRDL (108 aa). Low complexity-rich tracts occupy residues 39–54 and 62–80; these read PSSS…QSFP and SQRA…LTSS. The segment covering 90–103 has biased composition (polar residues); that stretch reads ESPNSFHGPSSSES. Residues 109–336 enclose the MAGE domain; that stretch reads LNTKTGELVQ…RARASRSFQP (228 aa).

The protein is Melanoma-associated antigen B17 (MAGEB17) of Homo sapiens (Human).